The primary structure comprises 125 residues: Fluoride-specific ion channel FluC (125 aa).

4 helical membrane-spanning segments follow: residues 7–27 (FFIV…MAVV), 36–56 (GFPY…GFLS), 63–83 (PYGR…FSTF), and 96–116 (FIFA…GVFC). Residues G75 and T78 each contribute to the Na(+) site.

The protein belongs to the fluoride channel Fluc/FEX (TC 1.A.43) family.

The protein resides in the cell inner membrane. It carries out the reaction fluoride(in) = fluoride(out). With respect to regulation, na(+) is not transported, but it plays an essential structural role and its presence is essential for fluoride channel function. Fluoride-specific ion channel. Important for reducing fluoride concentration in the cell, thus reducing its toxicity. This is Fluoride-specific ion channel FluC from Elusimicrobium minutum (strain Pei191).